Here is a 504-residue protein sequence, read N- to C-terminus: Maturase K (504 aa).

This sequence belongs to the intron maturase 2 family. MatK subfamily.

The protein resides in the plastid. It is found in the chloroplast. Its function is as follows. Usually encoded in the trnK tRNA gene intron. Probably assists in splicing its own and other chloroplast group II introns. This is Maturase K from Quercus lyrata (Overcup oak).